The sequence spans 290 residues: Homeobox protein HMX3-B (290 aa).

Disordered regions lie at residues M1–K41 and E96–T169. Residues L107–E124 are compositionally biased toward basic and acidic residues. Acidic residues predominate over residues S125–A137. Residues E138–K162 show a composition bias toward basic and acidic residues. The homeobox DNA-binding region spans K166–L225.

It belongs to the HMX homeobox family. As to expression, expressed in the ear placode and vesicle and in cells forming the vestibulo-acoustic ganglion.

Its subcellular location is the nucleus. Transcription factor involved in specification of neuronal cell types and which is required for inner ear and hypothalamus development. Binds to the 5'-CAAGTG-3' core sequence. The protein is Homeobox protein HMX3-B (hmx3b) of Oryzias latipes (Japanese rice fish).